A 423-amino-acid chain; its full sequence is Isovaleryl-CoA dehydrogenase, mitochondrial (423 aa).

The transit peptide at 1–29 (MATATRLLGWRVASWRMRPPPAGFVSQRA) directs the protein to the mitochondrion. Residues K55, K64, and K75 each carry the N6-acetyllysine; alternate modification. An N6-succinyllysine; alternate mark is found at K55, K64, and K75. FAD is bound by residues 162–171 (LAMSEPNAGS) and 195–197 (WIT). S171 contacts substrate. 219–220 (SR) is a substrate binding site. At K238 the chain carries N6-acetyllysine. Residue K259 is modified to N6-acetyllysine; alternate. K259 is subject to N6-succinyllysine; alternate. Residues Y274 and 281-284 (DLER) each bind substrate. E283 functions as the Proton acceptor in the catalytic mechanism. Residue R309 coordinates FAD. K315 carries the N6-succinyllysine modification. FAD contacts are provided by residues Q320 and 377-381 (QCFGG). Residue 404-405 (AG) coordinates substrate. 406–408 (TSE) is an FAD binding site.

This sequence belongs to the acyl-CoA dehydrogenase family. In terms of assembly, homotetramer. The cofactor is FAD.

Its subcellular location is the mitochondrion matrix. The catalysed reaction is 3-methylbutanoyl-CoA + oxidized [electron-transfer flavoprotein] + H(+) = 3-methylbut-2-enoyl-CoA + reduced [electron-transfer flavoprotein]. It carries out the reaction pentanoyl-CoA + oxidized [electron-transfer flavoprotein] + H(+) = (2E)-pentenoyl-CoA + reduced [electron-transfer flavoprotein]. It catalyses the reaction hexanoyl-CoA + oxidized [electron-transfer flavoprotein] + H(+) = (2E)-hexenoyl-CoA + reduced [electron-transfer flavoprotein]. The enzyme catalyses butanoyl-CoA + oxidized [electron-transfer flavoprotein] + H(+) = (2E)-butenoyl-CoA + reduced [electron-transfer flavoprotein]. The protein operates within amino-acid degradation; L-leucine degradation; (S)-3-hydroxy-3-methylglutaryl-CoA from 3-isovaleryl-CoA: step 1/3. Functionally, catalyzes the conversion of isovaleryl-CoA/3-methylbutanoyl-CoA to 3-methylbut-2-enoyl-CoA as an intermediate step in the leucine (Leu) catabolic pathway. To a lesser extent, is also able to catalyze the oxidation of other saturated short-chain acyl-CoA thioesters as pentanoyl-CoA, hexenoyl-CoA and butenoyl-CoA. The protein is Isovaleryl-CoA dehydrogenase, mitochondrial (IVD) of Pongo abelii (Sumatran orangutan).